Reading from the N-terminus, the 216-residue chain is RNA pyrophosphohydrolase (216 aa).

The region spanning 6 to 149 (GFRPNVGIIL…KRDVYQLALT (144 aa)) is the Nudix hydrolase domain. The Nudix box motif lies at 38–59 (GGIKYGETPMQAMYRELHEETG). The interval 159–180 (AQRTDKSRGPRAPRYPRVSNGH) is disordered.

This sequence belongs to the Nudix hydrolase family. RppH subfamily. A divalent metal cation is required as a cofactor.

Functionally, accelerates the degradation of transcripts by removing pyrophosphate from the 5'-end of triphosphorylated RNA, leading to a more labile monophosphorylated state that can stimulate subsequent ribonuclease cleavage. In Burkholderia thailandensis (strain ATCC 700388 / DSM 13276 / CCUG 48851 / CIP 106301 / E264), this protein is RNA pyrophosphohydrolase.